We begin with the raw amino-acid sequence, 148 residues long: UPF0208 membrane protein HD_1715 (148 aa).

2 consecutive transmembrane segments (helical) span residues 41–60 (AARF…YFFT) and 66–88 (ILAN…LYWL).

This sequence belongs to the UPF0208 family.

It localises to the cell inner membrane. In Haemophilus ducreyi (strain 35000HP / ATCC 700724), this protein is UPF0208 membrane protein HD_1715.